The following is a 241-amino-acid chain: Enolase-phosphatase E1 (241 aa).

The Mg(2+) site is built by Asp-9 and Glu-11. Substrate contacts are provided by residues 133 to 134 and Lys-172; that span reads SS. Asp-198 contributes to the Mg(2+) binding site.

Belongs to the HAD-like hydrolase superfamily. MasA/MtnC family. In terms of assembly, monomer. Mg(2+) serves as cofactor.

The protein localises to the cytoplasm. It is found in the nucleus. It carries out the reaction 5-methylsulfanyl-2,3-dioxopentyl phosphate + H2O = 1,2-dihydroxy-5-(methylsulfanyl)pent-1-en-3-one + phosphate. Its pathway is amino-acid biosynthesis; L-methionine biosynthesis via salvage pathway; L-methionine from S-methyl-5-thio-alpha-D-ribose 1-phosphate: step 3/6. It functions in the pathway amino-acid biosynthesis; L-methionine biosynthesis via salvage pathway; L-methionine from S-methyl-5-thio-alpha-D-ribose 1-phosphate: step 4/6. Its function is as follows. Bifunctional enzyme that catalyzes the enolization of 2,3-diketo-5-methylthiopentyl-1-phosphate (DK-MTP-1-P) into the intermediate 2-hydroxy-3-keto-5-methylthiopentenyl-1-phosphate (HK-MTPenyl-1-P), which is then dephosphorylated to form the acireductone 1,2-dihydroxy-3-keto-5-methylthiopentene (DHK-MTPene). The chain is Enolase-phosphatase E1 from Scheffersomyces stipitis (strain ATCC 58785 / CBS 6054 / NBRC 10063 / NRRL Y-11545) (Yeast).